We begin with the raw amino-acid sequence, 453 residues long: Adenosylmethionine-8-amino-7-oxononanoate aminotransferase (453 aa).

Residue 118 to 119 coordinates pyridoxal 5'-phosphate; it reads GS. Tyrosine 151 contacts substrate. A pyridoxal 5'-phosphate-binding site is contributed by aspartate 258. 3 residues coordinate substrate: lysine 287, glycine 322, and arginine 417. Lysine 287 is subject to N6-(pyridoxal phosphate)lysine.

This sequence belongs to the class-III pyridoxal-phosphate-dependent aminotransferase family. BioA subfamily. In terms of assembly, homodimer. Requires pyridoxal 5'-phosphate as cofactor.

The protein localises to the cytoplasm. The enzyme catalyses (8S)-8-amino-7-oxononanoate + S-adenosyl-L-methionine = S-adenosyl-4-methylsulfanyl-2-oxobutanoate + (7R,8S)-7,8-diammoniononanoate. The protein operates within cofactor biosynthesis; biotin biosynthesis; 7,8-diaminononanoate from 8-amino-7-oxononanoate (SAM route): step 1/1. Its function is as follows. Catalyzes the transfer of the alpha-amino group from S-adenosyl-L-methionine (SAM) to 7-keto-8-aminopelargonic acid (KAPA) to form 7,8-diaminopelargonic acid (DAPA). It is the only aminotransferase known to utilize SAM as an amino donor. The protein is Adenosylmethionine-8-amino-7-oxononanoate aminotransferase of Geobacter sulfurreducens (strain ATCC 51573 / DSM 12127 / PCA).